Here is a 233-residue protein sequence, read N- to C-terminus: MAKLTKRMRVIREKVDGTKLYEINDAVALLKELATAKFVESVDVAVNLGIDPRKSDQNVRGATVLPHGTGRDVRVAVFTQGANAEAAKAAGAELVGMDDLAEKIKAGEMNFDVVIASPDAMRVVGMLGQILGPRGLMPNPKTGTVTPNVAEAVKNAKAGQVRYRNDKNGIIHTTIGKVDFTPVQLKENLEALISALKKAKPAVAKGVYVKKVSISTTMGAGVAVDQASLETAN.

This sequence belongs to the universal ribosomal protein uL1 family. In terms of assembly, part of the 50S ribosomal subunit.

Its function is as follows. Binds directly to 23S rRNA. The L1 stalk is quite mobile in the ribosome, and is involved in E site tRNA release. Protein L1 is also a translational repressor protein, it controls the translation of the L11 operon by binding to its mRNA. The polypeptide is Large ribosomal subunit protein uL1 (Shewanella oneidensis (strain ATCC 700550 / JCM 31522 / CIP 106686 / LMG 19005 / NCIMB 14063 / MR-1)).